The following is a 41-amino-acid chain: Photosystem I reaction center subunit IX (41 aa).

Residues 7–27 (YLSTAPVVATGWFIVTAALLI) form a helical membrane-spanning segment.

Belongs to the PsaJ family.

The protein localises to the plastid. It is found in the chloroplast thylakoid membrane. Its function is as follows. May help in the organization of the PsaE and PsaF subunits. The polypeptide is Photosystem I reaction center subunit IX (Tetradesmus obliquus (Green alga)).